The following is a 101-amino-acid chain: Putative regulatory protein PrgT (101 aa).

Functionally, might be involved in the expression of prgA, but is not required for activation of the expression of prgB. This is Putative regulatory protein PrgT (prgT) from Enterococcus faecalis (strain ATCC 47077 / OG1RF).